We begin with the raw amino-acid sequence, 524 residues long: Probable cytochrome P450 12c1, mitochondrial (524 aa).

C470 lines the heme pocket.

The protein belongs to the cytochrome P450 family. Requires heme as cofactor.

Its subcellular location is the mitochondrion membrane. This is Probable cytochrome P450 12c1, mitochondrial (Cyp12c1) from Drosophila melanogaster (Fruit fly).